The following is a 354-amino-acid chain: Uroporphyrinogen decarboxylase (354 aa).

Substrate-binding positions include 27-31, Phe-46, Asp-77, Tyr-153, Thr-208, and His-326; that span reads RQAGR.

This sequence belongs to the uroporphyrinogen decarboxylase family. In terms of assembly, homodimer.

Its subcellular location is the cytoplasm. It carries out the reaction uroporphyrinogen III + 4 H(+) = coproporphyrinogen III + 4 CO2. The protein operates within porphyrin-containing compound metabolism; protoporphyrin-IX biosynthesis; coproporphyrinogen-III from 5-aminolevulinate: step 4/4. Functionally, catalyzes the decarboxylation of four acetate groups of uroporphyrinogen-III to yield coproporphyrinogen-III. The polypeptide is Uroporphyrinogen decarboxylase (Neisseria meningitidis serogroup A / serotype 4A (strain DSM 15465 / Z2491)).